The following is a 436-amino-acid chain: 5-methylthioadenosine/S-adenosylhomocysteine deaminase (436 aa).

Residues His-66 and His-68 each contribute to the Zn(2+) site. Substrate is bound by residues Glu-95, Arg-147, Arg-161, and His-187. Zn(2+) is bound at residue His-214. Substrate contacts are provided by Glu-217 and Asp-303. Asp-303 contacts Zn(2+).

The protein belongs to the metallo-dependent hydrolases superfamily. MTA/SAH deaminase family. The cofactor is Zn(2+).

The enzyme catalyses S-adenosyl-L-homocysteine + H2O + H(+) = S-inosyl-L-homocysteine + NH4(+). The catalysed reaction is S-methyl-5'-thioadenosine + H2O + H(+) = S-methyl-5'-thioinosine + NH4(+). In terms of biological role, catalyzes the deamination of 5-methylthioadenosine and S-adenosyl-L-homocysteine into 5-methylthioinosine and S-inosyl-L-homocysteine, respectively. Is also able to deaminate adenosine. The sequence is that of 5-methylthioadenosine/S-adenosylhomocysteine deaminase from Symbiobacterium thermophilum (strain DSM 24528 / JCM 14929 / IAM 14863 / T).